We begin with the raw amino-acid sequence, 321 residues long: Glycerol-3-phosphate dehydrogenase [NAD(P)+] (321 aa).

The NADPH site is built by Ser10, Phe11, Arg31, Arg32, and Lys104. Lys104 and Gly132 together coordinate sn-glycerol 3-phosphate. NADPH is bound at residue Ala136. The sn-glycerol 3-phosphate site is built by Lys186, Asp238, Ser248, Arg249, and Asn250. The Proton acceptor role is filled by Lys186. Arg249 provides a ligand contact to NADPH. NADPH is bound at residue Glu272.

This sequence belongs to the NAD-dependent glycerol-3-phosphate dehydrogenase family.

The protein localises to the cytoplasm. It catalyses the reaction sn-glycerol 3-phosphate + NAD(+) = dihydroxyacetone phosphate + NADH + H(+). The catalysed reaction is sn-glycerol 3-phosphate + NADP(+) = dihydroxyacetone phosphate + NADPH + H(+). In terms of biological role, catalyzes the reduction of the glycolytic intermediate dihydroxyacetone phosphate (DHAP) to sn-glycerol 3-phosphate (G3P). The protein is Glycerol-3-phosphate dehydrogenase [NAD(P)+] of Methanothermobacter thermautotrophicus (strain ATCC 29096 / DSM 1053 / JCM 10044 / NBRC 100330 / Delta H) (Methanobacterium thermoautotrophicum).